The primary structure comprises 304 residues: UDP-3-O-acyl-N-acetylglucosamine deacetylase (304 aa).

Positions 78, 237, and 241 each coordinate Zn(2+). H264 serves as the catalytic Proton donor.

The protein belongs to the LpxC family. Zn(2+) serves as cofactor.

The enzyme catalyses a UDP-3-O-[(3R)-3-hydroxyacyl]-N-acetyl-alpha-D-glucosamine + H2O = a UDP-3-O-[(3R)-3-hydroxyacyl]-alpha-D-glucosamine + acetate. It participates in glycolipid biosynthesis; lipid IV(A) biosynthesis; lipid IV(A) from (3R)-3-hydroxytetradecanoyl-[acyl-carrier-protein] and UDP-N-acetyl-alpha-D-glucosamine: step 2/6. Its function is as follows. Catalyzes the hydrolysis of UDP-3-O-myristoyl-N-acetylglucosamine to form UDP-3-O-myristoylglucosamine and acetate, the committed step in lipid A biosynthesis. The protein is UDP-3-O-acyl-N-acetylglucosamine deacetylase of Xylella fastidiosa (strain Temecula1 / ATCC 700964).